The chain runs to 447 residues: Probable glycine dehydrogenase (decarboxylating) subunit 1 (447 aa).

Belongs to the GcvP family. N-terminal subunit subfamily. As to quaternary structure, the glycine cleavage system is composed of four proteins: P, T, L and H. In this organism, the P 'protein' is a heterodimer of two subunits.

The enzyme catalyses N(6)-[(R)-lipoyl]-L-lysyl-[glycine-cleavage complex H protein] + glycine + H(+) = N(6)-[(R)-S(8)-aminomethyldihydrolipoyl]-L-lysyl-[glycine-cleavage complex H protein] + CO2. Its function is as follows. The glycine cleavage system catalyzes the degradation of glycine. The P protein binds the alpha-amino group of glycine through its pyridoxal phosphate cofactor; CO(2) is released and the remaining methylamine moiety is then transferred to the lipoamide cofactor of the H protein. The protein is Probable glycine dehydrogenase (decarboxylating) subunit 1 of Bacillus anthracis (strain A0248).